A 553-amino-acid polypeptide reads, in one-letter code: Glutamine--tRNA ligase (553 aa).

Residues 34–44 (PEPNGYLHIGH) carry the 'HIGH' region motif. Residues 35-37 (EPN) and 41-47 (HIGHAKS) contribute to the ATP site. Residues D67 and Y212 each contribute to the L-glutamine site. Residues T231, 261–262 (RL), and 269–271 (MSK) each bind ATP. Positions 268–272 (IMSKR) match the 'KMSKS' region motif.

The protein belongs to the class-I aminoacyl-tRNA synthetase family. Monomer.

The protein resides in the cytoplasm. It catalyses the reaction tRNA(Gln) + L-glutamine + ATP = L-glutaminyl-tRNA(Gln) + AMP + diphosphate. The protein is Glutamine--tRNA ligase of Tolumonas auensis (strain DSM 9187 / NBRC 110442 / TA 4).